The chain runs to 361 residues: 3-dehydroquinate synthase (361 aa).

NAD(+)-binding positions include 72–77 (SGEKEK), 130–131 (TT), Lys142, and Lys151. Residues Glu184, His247, and His264 each coordinate Zn(2+).

The protein belongs to the sugar phosphate cyclases superfamily. Dehydroquinate synthase family. Requires Co(2+) as cofactor. Zn(2+) is required as a cofactor. The cofactor is NAD(+).

Its subcellular location is the cytoplasm. The enzyme catalyses 7-phospho-2-dehydro-3-deoxy-D-arabino-heptonate = 3-dehydroquinate + phosphate. It participates in metabolic intermediate biosynthesis; chorismate biosynthesis; chorismate from D-erythrose 4-phosphate and phosphoenolpyruvate: step 2/7. Functionally, catalyzes the conversion of 3-deoxy-D-arabino-heptulosonate 7-phosphate (DAHP) to dehydroquinate (DHQ). The protein is 3-dehydroquinate synthase of Bacillus cereus (strain B4264).